A 389-amino-acid chain; its full sequence is Succinate--CoA ligase [ADP-forming] subunit beta (389 aa).

Residues 9–244 (KQILRKYGIP…PSQMSNNEAR (236 aa)) enclose the ATP-grasp domain. Residues Lys46, 53 to 55 (GRG), Ile102, and Glu107 each bind ATP. Residues Asn199 and Asp213 each coordinate Mg(2+). Substrate contacts are provided by residues Asn264 and 321–323 (GIM).

The protein belongs to the succinate/malate CoA ligase beta subunit family. In terms of assembly, heterotetramer of two alpha and two beta subunits. Requires Mg(2+) as cofactor.

It carries out the reaction succinate + ATP + CoA = succinyl-CoA + ADP + phosphate. The catalysed reaction is GTP + succinate + CoA = succinyl-CoA + GDP + phosphate. It participates in carbohydrate metabolism; tricarboxylic acid cycle; succinate from succinyl-CoA (ligase route): step 1/1. Its function is as follows. Succinyl-CoA synthetase functions in the citric acid cycle (TCA), coupling the hydrolysis of succinyl-CoA to the synthesis of either ATP or GTP and thus represents the only step of substrate-level phosphorylation in the TCA. The beta subunit provides nucleotide specificity of the enzyme and binds the substrate succinate, while the binding sites for coenzyme A and phosphate are found in the alpha subunit. This is Succinate--CoA ligase [ADP-forming] subunit beta from Protochlamydia amoebophila (strain UWE25).